A 196-amino-acid polypeptide reads, in one-letter code: Ribonuclease HII (196 aa).

Residues 15–196 (FILAGIDEAG…RLSFTKALYK (182 aa)) form the RNase H type-2 domain. A divalent metal cation contacts are provided by aspartate 21, glutamate 22, and aspartate 112.

The protein belongs to the RNase HII family. Requires Mn(2+) as cofactor. Mg(2+) serves as cofactor.

The protein resides in the cytoplasm. It catalyses the reaction Endonucleolytic cleavage to 5'-phosphomonoester.. In terms of biological role, endonuclease that specifically degrades the RNA of RNA-DNA hybrids. The polypeptide is Ribonuclease HII (Rickettsia bellii (strain OSU 85-389)).